We begin with the raw amino-acid sequence, 475 residues long: 3-isopropylmalate dehydratase large subunit (475 aa).

3 residues coordinate [4Fe-4S] cluster: cysteine 349, cysteine 409, and cysteine 412.

It belongs to the aconitase/IPM isomerase family. LeuC type 1 subfamily. Heterodimer of LeuC and LeuD. [4Fe-4S] cluster is required as a cofactor.

It catalyses the reaction (2R,3S)-3-isopropylmalate = (2S)-2-isopropylmalate. The protein operates within amino-acid biosynthesis; L-leucine biosynthesis; L-leucine from 3-methyl-2-oxobutanoate: step 2/4. Its function is as follows. Catalyzes the isomerization between 2-isopropylmalate and 3-isopropylmalate, via the formation of 2-isopropylmaleate. This is 3-isopropylmalate dehydratase large subunit from Cereibacter sphaeroides (strain KD131 / KCTC 12085) (Rhodobacter sphaeroides).